A 549-amino-acid chain; its full sequence is Eukaryotic translation initiation factor 3 subunit D-2 (549 aa).

Residues 107 to 157 (ARVKGRSGRGPGMLGVAGSMAGGGTTSGSTKYGKGRESRRNQGRRFARNAP) form a disordered region. A compositionally biased stretch (gly residues) spans 114–132 (GRGPGMLGVAGSMAGGGTT). An RNA gate region spans residues 288–302 (QFDLLTVNETSLEPP). The segment at 527-549 (NSFDSDAEDEENSSEPFANSLDN) is disordered. Acidic residues predominate over residues 529–539 (FDSDAEDEENS).

The protein belongs to the eIF-3 subunit D family. As to quaternary structure, component of the eukaryotic translation initiation factor 3 (eIF-3) complex. The eIF-3 complex interacts with pix.

It localises to the cytoplasm. Its function is as follows. mRNA cap-binding component of the eukaryotic translation initiation factor 3 (eIF-3) complex, which is involved in protein synthesis of a specialized repertoire of mRNAs and, together with other initiation factors, stimulates binding of mRNA and methionyl-tRNAi to the 40S ribosome. The eIF-3 complex specifically targets and initiates translation of a subset of mRNAs involved in cell proliferation. In the eIF-3 complex, eif3d specifically recognizes and binds the 7-methylguanosine cap of a subset of mRNAs. This is Eukaryotic translation initiation factor 3 subunit D-2 from Drosophila ananassae (Fruit fly).